The sequence spans 160 residues: Probable small nuclear ribonucleoprotein-associated protein B (160 aa).

In terms of domain architecture, Sm spans S4–P86. The tract at residues M80–F160 is disordered. Gly residues-rich tracts occupy residues G99–G113, A128–G143, and G150–F160.

This sequence belongs to the snRNP SmB/SmN family.

The protein resides in the nucleus. Its subcellular location is the cytoplasm. The protein localises to the cytosol. Functionally, plays a role in pre-mRNA splicing as a core component of the spliceosomal U1, U2, U4 and U5 small nuclear ribonucleoproteins (snRNPs), the building blocks of the spliceosome. The chain is Probable small nuclear ribonucleoprotein-associated protein B (snr-2) from Caenorhabditis elegans.